Reading from the N-terminus, the 453-residue chain is MLEKAEKQRRAGSGQQRAAGYMPGFGNDFETESLPGALPQGQNSPQKCNYGLYAEQLSGSPFTAPRGTNERSWLYRIRPSVRHTGRFRRVDYPHWKTAPHVGEHSLALGQLRWSPLPAPSEALDFLQGIRTMTTAGDALTQAGMAAHAYAFNADMVDDYFFNADGELLIVPETGAIQVFTELGRMDVEPSEICLIPRGMMFKVTRLGEEKVWRGYICENYGAKFTLPDRGPIGANCLANPRDFKTPVAAYEDKETPCRVQVKWCGSFHMVEIGHSPLDVVAWHGNYAPYKYDLKTFSPVGAILFDHPDPSIFTVLTAPSGEEGTANVDFVIFPPRWLVAEHTFRPPWYHRNIMSEFMGLIYGRYDAKEEGFVPGGMSLHNMMLAHGPDFSGFEKASNGELKPVKLDNTMAFMFETRFPQQLTTFAAELDTLQDDYMDCWSGLERKFDGTPGIK.

Residues Met-1 to Gln-42 are disordered. Catalysis depends on His-306, which acts as the Proton acceptor. Residues His-349 and Glu-355 each coordinate Fe cation. 2 residues coordinate homogentisate: Tyr-364 and His-385. Residue His-385 coordinates Fe cation.

The protein belongs to the homogentisate dioxygenase family. Hexamer; dimer of trimers. It depends on Fe cation as a cofactor.

It carries out the reaction homogentisate + O2 = 4-maleylacetoacetate + H(+). Its pathway is amino-acid degradation; L-phenylalanine degradation; acetoacetate and fumarate from L-phenylalanine: step 4/6. Its function is as follows. Involved in the catabolism of homogentisate (2,5-dihydroxyphenylacetate or 2,5-OH-PhAc), a central intermediate in the degradation of phenylalanine and tyrosine. Catalyzes the oxidative ring cleavage of the aromatic ring of homogentisate to yield maleylacetoacetate. The protein is Homogentisate 1,2-dioxygenase of Rhizobium meliloti (strain 1021) (Ensifer meliloti).